The sequence spans 212 residues: Cell division protein SepF (212 aa).

Positions 32–104 (RYADPDTSYD…APLGSDAHRE (73 aa)) are disordered. Acidic residues predominate over residues 64-73 (EAEEDGGDYG).

This sequence belongs to the SepF family. Homodimer. Interacts with FtsZ.

It is found in the cytoplasm. Cell division protein that is part of the divisome complex and is recruited early to the Z-ring. Probably stimulates Z-ring formation, perhaps through the cross-linking of FtsZ protofilaments. Its function overlaps with FtsA. This is Cell division protein SepF from Saccharopolyspora erythraea (strain ATCC 11635 / DSM 40517 / JCM 4748 / NBRC 13426 / NCIMB 8594 / NRRL 2338).